Consider the following 438-residue polypeptide: Xylose isomerase (438 aa).

Active-site residues include H103 and D106. Residues E234, E270, H273, D298, D309, D311, and D341 each coordinate Mg(2+).

Belongs to the xylose isomerase family. In terms of assembly, homotetramer. Requires Mg(2+) as cofactor.

Its subcellular location is the cytoplasm. The enzyme catalyses alpha-D-xylose = alpha-D-xylulofuranose. In Phocaeicola vulgatus (strain ATCC 8482 / DSM 1447 / JCM 5826 / CCUG 4940 / NBRC 14291 / NCTC 11154) (Bacteroides vulgatus), this protein is Xylose isomerase.